The primary structure comprises 525 residues: Putative ribose/galactose/methyl galactoside import ATP-binding protein (525 aa).

The disordered stretch occupies residues Met-1–Pro-30. Over residues Asp-14–Pro-25 the composition is skewed to low complexity. ABC transporter domains lie at Leu-33–Glu-269 and Lys-279–Lys-523. Residue Gly-65–Ser-72 coordinates ATP.

This sequence belongs to the ABC transporter superfamily. Carbohydrate importer 2 (CUT2) (TC 3.A.1.2) family.

The protein localises to the cell inner membrane. It carries out the reaction D-ribose(out) + ATP + H2O = D-ribose(in) + ADP + phosphate + H(+). It catalyses the reaction D-galactose(out) + ATP + H2O = D-galactose(in) + ADP + phosphate + H(+). In terms of biological role, part of an ABC transporter complex involved in carbohydrate import. Could be involved in ribose, galactose and/or methyl galactoside import. Responsible for energy coupling to the transport system. In Pseudomonas savastanoi pv. phaseolicola (strain 1448A / Race 6) (Pseudomonas syringae pv. phaseolicola (strain 1448A / Race 6)), this protein is Putative ribose/galactose/methyl galactoside import ATP-binding protein.